A 689-amino-acid chain; its full sequence is Glycine--tRNA ligase beta subunit (689 aa).

This sequence belongs to the class-II aminoacyl-tRNA synthetase family. In terms of assembly, tetramer of two alpha and two beta subunits.

It is found in the cytoplasm. It catalyses the reaction tRNA(Gly) + glycine + ATP = glycyl-tRNA(Gly) + AMP + diphosphate. The sequence is that of Glycine--tRNA ligase beta subunit from Yersinia pseudotuberculosis serotype O:1b (strain IP 31758).